A 119-amino-acid polypeptide reads, in one-letter code: Large ribosomal subunit protein uL14 (119 aa).

The protein belongs to the universal ribosomal protein uL14 family. In terms of assembly, part of the 50S ribosomal subunit. Forms a cluster with proteins L3 and L19. In the 70S ribosome, L14 and L19 interact and together make contacts with the 16S rRNA in bridges B5 and B8.

Binds to 23S rRNA. Forms part of two intersubunit bridges in the 70S ribosome. This Anaplasma marginale (strain St. Maries) protein is Large ribosomal subunit protein uL14.